The primary structure comprises 1078 residues: Teashirt homolog 1-A (1078 aa).

Disordered stretches follow at residues 1-110, 140-197, and 271-300; these read MPRR…NVSY, KSNE…SNSA, and GHYR…MEME. The segment covering 26–36 has biased composition (acidic residues); that stretch reads IEEDNLEDDGL. Residues 57 to 71 show a composition bias toward polar residues; that stretch reads PSYQNSPISSATNQD. Residues 143–197 are compositionally biased toward low complexity; it reads ENSSPTTNTNKSSMSEATGSTSDPDTPTTIPSSSCTNTSTSISVTTSNSTNSNSA. C2H2-type zinc fingers lie at residues 248 to 272 and 309 to 333; these read FKCK…ETGH and LKCM…KTKH. The segment covering 271-286 has biased composition (basic and acidic residues); it reads GHYRDDNKDRDAERTK. The segment at 365-394 is disordered; the sequence is DSPEQAGISPGASVSESAKDPKAANPYVTP. The segment at 418 to 442 adopts a C2H2-type 3 zinc-finger fold; sequence LKCMECGSSHDSLQQLTAHMMVTGH. 2 disordered regions span residues 472–524 and 850–877; these read LPPT…ENED and RLTP…EAMD. The segment covering 497-524 has biased composition (basic and acidic residues); sequence HSEEKKDPEKEKVNNCEVEKRIKEENED. A compositionally biased stretch (polar residues) spans 853-862; that stretch reads PKSSTPSTVS. Residues 885–955 constitute a DNA-binding region (homeobox); that stretch reads RKGRQSNWNP…NVKYQLRRTG (71 aa). 2 consecutive C2H2-type zinc fingers follow at residues 970–992 and 1038–1061; these read FFCN…LETH and FQCK…SKTH.

It belongs to the teashirt C2H2-type zinc-finger protein family.

The protein resides in the nucleus. Its function is as follows. Probable transcriptional regulator involved in developmental processes. May act as a transcriptional repressor (Potential). Involved in two major neuronal regionalization processes: primary anteroposterior (AP) axis patterning of the CNS and segmentation of the cranial neuronal crest (CNS) development. This is Teashirt homolog 1-A (tshz1-a) from Xenopus laevis (African clawed frog).